The sequence spans 305 residues: MLRITFLGTGGSLPTRNRNPSAVMINREGELMLFDCGEGTQQQMMRAKTGMMSLSSIFVSHFHADHFLGIPGLIQTMSFMGRKDPLMIYGPAGTREFTELFKALGYFNLKYEIHGMELKPGDVVEGEGYVVRALETEHSTPSLGYALIENPRPGRFNREKAVALGVPPGPLFSKLQKGNPVEAGGKVVRPEEVMGTPRPGRTIVYSGDTRPCEAVLEASRDADLLIHDGSFADEMAEWAEESMHSTAGEVAALAKEAGVRKLVLTHISSRYTDDVEPILKDSKKVFENVIVAEDLMELEIPYRPE.

The Zn(2+) site is built by H61, H63, D65, H66, H138, D208, and H266. Catalysis depends on D65, which acts as the Proton acceptor.

Belongs to the RNase Z family. In terms of assembly, homodimer. Zn(2+) serves as cofactor.

The enzyme catalyses Endonucleolytic cleavage of RNA, removing extra 3' nucleotides from tRNA precursor, generating 3' termini of tRNAs. A 3'-hydroxy group is left at the tRNA terminus and a 5'-phosphoryl group is left at the trailer molecule.. Its function is as follows. Zinc phosphodiesterase, which displays some tRNA 3'-processing endonuclease activity. Probably involved in tRNA maturation, by removing a 3'-trailer from precursor tRNA. The sequence is that of Ribonuclease Z from Methanosarcina acetivorans (strain ATCC 35395 / DSM 2834 / JCM 12185 / C2A).